A 137-amino-acid chain; its full sequence is Profilin-3 (137 aa).

This sequence belongs to the profilin family. In terms of assembly, interacts with ACTRT3. As to expression, testis specific.

It localises to the cytoplasm. The protein localises to the cytoskeleton. It is found in the nucleus. Its function is as follows. Binds to actin and affects the structure of the cytoskeleton. Slightly reduces actin polymerization. Binds to poly-L-proline, phosphatidylinositol 3-phosphate (PtdIns(3)P), phosphatidylinositol 4,5-bisphosphate (PtdIns(4,5)P2) and phosphatidylinositol 4-phosphate (PtdIns(4)P). May be involved in spermatogenesis. The protein is Profilin-3 (PFN3) of Homo sapiens (Human).